Reading from the N-terminus, the 243-residue chain is Zinc import ATP-binding protein ZnuC (243 aa).

Residues Leu8–His225 enclose the ABC transporter domain. Position 40 to 47 (Gly40 to Ser47) interacts with ATP.

This sequence belongs to the ABC transporter superfamily. Zinc importer (TC 3.A.1.15.5) family. The complex is composed of two ATP-binding proteins (ZnuC), two transmembrane proteins (ZnuB) and a solute-binding protein (ZnuA).

Its subcellular location is the cell inner membrane. It catalyses the reaction Zn(2+)(out) + ATP(in) + H2O(in) = Zn(2+)(in) + ADP(in) + phosphate(in) + H(+)(in). Part of the ABC transporter complex ZnuABC involved in zinc import. Responsible for energy coupling to the transport system. In Psychrobacter cryohalolentis (strain ATCC BAA-1226 / DSM 17306 / VKM B-2378 / K5), this protein is Zinc import ATP-binding protein ZnuC.